Reading from the N-terminus, the 511-residue chain is MEKFEGYSEKHKSCQQYFVYPLLFQEYIYAFAHDYGLNDSEPVEIISCNNKKFSSLLVKRLITRMYQQNFWINSINHPNQDRLLDYKIGFYSEFYSQILPEGFSIVVEIPFSLRELSCPKEKEIPKFQNLRSIHSIFPFLEDKFLHLDSISHIEIPYPIHLEILVQLLQYRIQDVPSLHLLRFFLNYYSNWNSFITSMKSIFLFKKENKRLFRFLYNSYVSEYEFLLVFLRKQSSCLPLSSSGTFLERIIFSRKMEHIGIMYPSFFRKTIWFVMDPLMHYVRYQGKAILASKGTHFLNKKWKWYLINLWQYLFSFWTQPRRVHLNQLANSCFDFLGYLSGVPKSSLLVRNQMLENLFLIDTRMKKLDTIVPVTALIGYLSKAQFCTGSGHPISKPIWTDLSDWDILDRFGRICRNLFHYHSGSSKKQTLYRLKYILRLSCARTLARKHKSTVRTFMQRLGSAFLEEFFTEQELVFSLMFTKTSLFSFRGSHSERIWYFDIIRINDLVKPLN.

Belongs to the intron maturase 2 family. MatK subfamily.

The protein localises to the plastid. Its subcellular location is the chloroplast. Functionally, usually encoded in the trnK tRNA gene intron. Probably assists in splicing its own and other chloroplast group II introns. This is Maturase K from Avena sativa (Oat).